Reading from the N-terminus, the 401-residue chain is ATP phosphoribosyltransferase regulatory subunit (401 aa).

Residues 373–401 (PGQQGGAAAQGCDRRLQQDDGGGWVTRPL) form a disordered region. Positions 392-401 (DGGGWVTRPL) are enriched in gly residues.

It belongs to the class-II aminoacyl-tRNA synthetase family. HisZ subfamily. As to quaternary structure, heteromultimer composed of HisG and HisZ subunits.

The protein localises to the cytoplasm. The protein operates within amino-acid biosynthesis; L-histidine biosynthesis; L-histidine from 5-phospho-alpha-D-ribose 1-diphosphate: step 1/9. Functionally, required for the first step of histidine biosynthesis. May allow the feedback regulation of ATP phosphoribosyltransferase activity by histidine. In Alkalilimnicola ehrlichii (strain ATCC BAA-1101 / DSM 17681 / MLHE-1), this protein is ATP phosphoribosyltransferase regulatory subunit.